We begin with the raw amino-acid sequence, 100 residues long: Urease subunit gamma (100 aa).

This sequence belongs to the urease gamma subunit family. As to quaternary structure, heterotrimer of UreA (gamma), UreB (beta) and UreC (alpha) subunits. Three heterotrimers associate to form the active enzyme.

Its subcellular location is the cytoplasm. The catalysed reaction is urea + 2 H2O + H(+) = hydrogencarbonate + 2 NH4(+). The protein operates within nitrogen metabolism; urea degradation; CO(2) and NH(3) from urea (urease route): step 1/1. This chain is Urease subunit gamma, found in Prochlorococcus marinus (strain MIT 9313).